Reading from the N-terminus, the 227-residue chain is Glutathione S-transferase U7 (227 aa).

A GST N-terminal domain is found at 8 to 87 (EEVKLLGMWA…YIDETWRDNP (80 aa)). Glutathione is bound by residues 18–19 (SP), 44–45 (NK), 58–59 (MI), and 71–72 (ES). Residues 92-215 (DPYERTMARF…PPEDEHLKYI (124 aa)) form the GST C-terminal domain.

This sequence belongs to the GST superfamily. Tau family.

It localises to the cytoplasm. Its subcellular location is the cytosol. It carries out the reaction RX + glutathione = an S-substituted glutathione + a halide anion + H(+). In terms of biological role, may be involved in the conjugation of reduced glutathione to a wide number of exogenous and endogenous hydrophobic electrophiles and have a detoxification role against certain herbicides. The chain is Glutathione S-transferase U7 (GSTU7) from Arabidopsis thaliana (Mouse-ear cress).